We begin with the raw amino-acid sequence, 304 residues long: Ribosomal RNA small subunit methyltransferase H (304 aa).

S-adenosyl-L-methionine is bound by residues 36-38 (CGH), D55, F81, D102, and Q109.

It belongs to the methyltransferase superfamily. RsmH family.

It is found in the cytoplasm. It catalyses the reaction cytidine(1402) in 16S rRNA + S-adenosyl-L-methionine = N(4)-methylcytidine(1402) in 16S rRNA + S-adenosyl-L-homocysteine + H(+). Functionally, specifically methylates the N4 position of cytidine in position 1402 (C1402) of 16S rRNA. This chain is Ribosomal RNA small subunit methyltransferase H, found in Onion yellows phytoplasma (strain OY-M).